The sequence spans 251 residues: tRNA (guanine-N(7)-)-methyltransferase (251 aa).

Residues Glu80, Glu105, Asp132, and Asp155 each coordinate S-adenosyl-L-methionine. Asp155 is an active-site residue. Residues Lys159, Asp191, and 228-231 (TKFE) contribute to the substrate site.

Belongs to the class I-like SAM-binding methyltransferase superfamily. TrmB family.

The enzyme catalyses guanosine(46) in tRNA + S-adenosyl-L-methionine = N(7)-methylguanosine(46) in tRNA + S-adenosyl-L-homocysteine. It functions in the pathway tRNA modification; N(7)-methylguanine-tRNA biosynthesis. Its function is as follows. Catalyzes the formation of N(7)-methylguanine at position 46 (m7G46) in tRNA. In Histophilus somni (strain 2336) (Haemophilus somnus), this protein is tRNA (guanine-N(7)-)-methyltransferase.